A 93-amino-acid chain; its full sequence is Small ribosomal subunit protein uS19 (93 aa).

The protein belongs to the universal ribosomal protein uS19 family.

Functionally, protein S19 forms a complex with S13 that binds strongly to the 16S ribosomal RNA. The chain is Small ribosomal subunit protein uS19 from Symbiobacterium thermophilum (strain DSM 24528 / JCM 14929 / IAM 14863 / T).